The sequence spans 387 residues: Sedoheptulose-1,7-bisphosphatase, chloroplastic (387 aa).

A disulfide bridge connects residues Cys109 and Cys114. Residues Asp120, Glu149, Asp170, Leu172, and Asp173 each contribute to the Mg(2+) site. Substrate is bound by residues 173-176, Tyr284, and Lys314; that span reads DGSS. Residue Glu320 coordinates Mg(2+).

The protein belongs to the FBPase class 1 family. In terms of assembly, homodimer. Requires Mg(2+) as cofactor.

Its subcellular location is the plastid. The protein resides in the chloroplast. It catalyses the reaction D-sedoheptulose 1,7-bisphosphate + H2O = D-sedoheptulose 7-phosphate + phosphate. It participates in carbohydrate biosynthesis; Calvin cycle. In Spinacia oleracea (Spinach), this protein is Sedoheptulose-1,7-bisphosphatase, chloroplastic.